The sequence spans 184 residues: Elongation factor P (184 aa).

This sequence belongs to the elongation factor P family.

Its subcellular location is the cytoplasm. The protein operates within protein biosynthesis; polypeptide chain elongation. Its function is as follows. Involved in peptide bond synthesis. Stimulates efficient translation and peptide-bond synthesis on native or reconstituted 70S ribosomes in vitro. Probably functions indirectly by altering the affinity of the ribosome for aminoacyl-tRNA, thus increasing their reactivity as acceptors for peptidyl transferase. The sequence is that of Elongation factor P from Leptothrix cholodnii (strain ATCC 51168 / LMG 8142 / SP-6) (Leptothrix discophora (strain SP-6)).